Here is a 408-residue protein sequence, read N- to C-terminus: Snake venom metalloproteinase BaP1 (408 aa).

The signal sequence occupies residues 1–20 (MIEVLLVTICLAVFPYQGSS). A propeptide spanning residues 21–191 (IILESGNVND…KASQSNLTPE (171 aa)) is cleaved from the precursor. Glutamine 192 carries the pyrrolidone carboxylic acid modification. In terms of domain architecture, Peptidase M12B spans 198-394 (RYIELAVVAD…HNPQCILNKP (197 aa)). Cystine bridges form between cysteine 309–cysteine 389, cysteine 349–cysteine 373, and cysteine 351–cysteine 356. Histidine 334 is a binding site for Zn(2+). Glutamate 335 is an active-site residue. The Zn(2+) site is built by histidine 338 and histidine 344. A propeptide spanning residues 395–408 (LLTVSGNELLEAGE) is cleaved from the precursor.

The protein belongs to the venom metalloproteinase (M12B) family. P-I subfamily. In terms of assembly, monomer. Zn(2+) serves as cofactor. Expressed by the venom gland.

The protein localises to the secreted. With respect to regulation, inhibited by EDTA, partially inhibited by o-phenantropine, and not inhibited by PMSF, pepstatin A, and aprotinin. Functionally, zinc metalloprotease that exhibits a weak hemorrhagic activity (with a minimum hemorrhagic dose of 20 ug by intradermal and intramuscular injection into mice). The basal membrane components collagen (all chains of type IV) (COL4A4), laminin and nidogen are all degraded by this toxin. Rapidly degrades the Aalpha-chain (FGA) of fibrinogen, and later on, degrades the Bbeta-chain (FGB) of fibrinogen. Also activates the complement system, and induces rat neutrophil chemotaxis. Induces edema in mouse food pad and shows a mild myotoxicity. The polypeptide is Snake venom metalloproteinase BaP1 (Bothrops asper (Terciopelo)).